Reading from the N-terminus, the 141-residue chain is Large ribosomal subunit protein bL17 (141 aa).

This sequence belongs to the bacterial ribosomal protein bL17 family. As to quaternary structure, part of the 50S ribosomal subunit. Contacts protein L32.

This chain is Large ribosomal subunit protein bL17, found in Maridesulfovibrio salexigens (strain ATCC 14822 / DSM 2638 / NCIMB 8403 / VKM B-1763) (Desulfovibrio salexigens).